A 292-amino-acid chain; its full sequence is Norajmaline N-methyltransferase (292 aa).

Residues 71 to 80 form an SAM motif I region; sequence KNMLDIGCGV. Residues 134–142 form an SAM motif II region; it reads KDGTFDLVL. Residues 135–141 carry the Vacuolar targeting signal motif; it reads DGTFDLV. The interval 161-170 is SAM motif III; it reads IRVAAPGAPI.

Belongs to the class I-like SAM-binding methyltransferase superfamily. gTMT family. In terms of assembly, homodimer. In terms of tissue distribution, mainly expressed in mature roots and, to a lesser extent, in leaves, stems and flowers.

It localises to the vacuole membrane. It catalyses the reaction norajmaline + S-adenosyl-L-methionine = ajmaline + S-adenosyl-L-homocysteine + H(+). The enzyme catalyses 4-methylnorajmaline + S-adenosyl-L-methionine = 4-methylajmaline + S-adenosyl-L-homocysteine + H(+). Its pathway is alkaloid biosynthesis; ajmaline biosynthesis. In terms of biological role, N-methyltransferase involved in the biosynthesis of ajmaline-type monoterpenoid indole alkaloids (MIAs) natural products, important plant-derived pharmaceuticals used in the therapy of heart disorders. Catalyzes the indole N-methylation of norajmaline to produce ajmaline. Also able, with a lower efficiency, to mediates the conversion of 4-methylnorajmaline to 4-methylajmaline. The sequence is that of Norajmaline N-methyltransferase from Rauvolfia serpentina (Serpentine wood).